A 152-amino-acid chain; its full sequence is Histone deacetylase complex subunit SAP18 (152 aa).

The disordered stretch occupies residues 1 to 38 (MAEAARRQGGGRPLPPPPRGVNQQPPRPKPEPVDREKT). The span at 28–38 (PKPEPVDREKT) shows a compositional bias: basic and acidic residues.

The protein belongs to the SAP18 family. In terms of assembly, interacts with SIN3, ERF3, ERF4 and HDA19. Ubiquitous, with low level in flowers.

Its function is as follows. Links the histone deacetylase complex to transcriptional repressors bound to chromatin. Involved in the tethering of the SIN3 complex to core histone proteins. The chain is Histone deacetylase complex subunit SAP18 from Arabidopsis thaliana (Mouse-ear cress).